The following is a 229-amino-acid chain: Ribosomal RNA small subunit methyltransferase G (229 aa).

S-adenosyl-L-methionine-binding positions include Gly-87, Leu-92, 138–139 (VE), and Arg-154.

Belongs to the methyltransferase superfamily. RNA methyltransferase RsmG family.

Its subcellular location is the cytoplasm. It carries out the reaction guanosine(527) in 16S rRNA + S-adenosyl-L-methionine = N(7)-methylguanosine(527) in 16S rRNA + S-adenosyl-L-homocysteine. Specifically methylates the N7 position of guanine in position 527 of 16S rRNA. This Oleidesulfovibrio alaskensis (strain ATCC BAA-1058 / DSM 17464 / G20) (Desulfovibrio alaskensis) protein is Ribosomal RNA small subunit methyltransferase G.